Here is a 288-residue protein sequence, read N- to C-terminus: N-acetylneuraminate lyase (288 aa).

2 residues coordinate aceneuramate: Ser44 and Thr45. Catalysis depends on Tyr133, which acts as the Proton donor. Residue Lys161 is the Schiff-base intermediate with substrate of the active site. Aceneuramate is bound by residues Thr163, Gly185, Asp187, Glu188, and Ser204.

The protein belongs to the DapA family. NanA subfamily. In terms of assembly, homotetramer.

It is found in the cytoplasm. The catalysed reaction is aceneuramate = aldehydo-N-acetyl-D-mannosamine + pyruvate. It participates in amino-sugar metabolism; N-acetylneuraminate degradation; D-fructose 6-phosphate from N-acetylneuraminate: step 1/5. In terms of biological role, catalyzes the reversible aldol cleavage of N-acetylneuraminic acid (sialic acid; Neu5Ac) to form pyruvate and N-acetylmannosamine (ManNAc) via a Schiff base intermediate. The chain is N-acetylneuraminate lyase from Clostridium perfringens (strain ATCC 13124 / DSM 756 / JCM 1290 / NCIMB 6125 / NCTC 8237 / Type A).